A 403-amino-acid polypeptide reads, in one-letter code: Argininosuccinate synthase (403 aa).

ATP contacts are provided by residues 10–18 and alanine 38; that span reads AYSGGVDTS. Tyrosine 89 lines the L-citrulline pocket. An ATP-binding site is contributed by glycine 119. L-aspartate-binding residues include threonine 121, asparagine 125, and aspartate 126. Asparagine 125 contributes to the L-citrulline binding site. Arginine 129, serine 177, serine 186, glutamate 262, and tyrosine 274 together coordinate L-citrulline.

It belongs to the argininosuccinate synthase family. Type 1 subfamily. In terms of assembly, homotetramer.

It localises to the cytoplasm. It catalyses the reaction L-citrulline + L-aspartate + ATP = 2-(N(omega)-L-arginino)succinate + AMP + diphosphate + H(+). Its pathway is amino-acid biosynthesis; L-arginine biosynthesis; L-arginine from L-ornithine and carbamoyl phosphate: step 2/3. The protein is Argininosuccinate synthase of Parasynechococcus marenigrum (strain WH8102).